We begin with the raw amino-acid sequence, 606 residues long: tRNA 5-methylaminomethyl-2-thiouridine biosynthesis bifunctional protein MnmC (606 aa).

Positions 1–237 are tRNA (mnm(5)s(2)U34)-methyltransferase; that stretch reads MNSNSSVQFN…KRDMLCGHYL (237 aa). Residues 254 to 606 are FAD-dependent cmnm(5)s(2)U34 oxidoreductase; sequence IGGGISAACS…RRISVSRFKG (353 aa).

It in the N-terminal section; belongs to the methyltransferase superfamily. tRNA (mnm(5)s(2)U34)-methyltransferase family. This sequence in the C-terminal section; belongs to the DAO family. It depends on FAD as a cofactor.

Its subcellular location is the cytoplasm. The catalysed reaction is 5-aminomethyl-2-thiouridine(34) in tRNA + S-adenosyl-L-methionine = 5-methylaminomethyl-2-thiouridine(34) in tRNA + S-adenosyl-L-homocysteine + H(+). Functionally, catalyzes the last two steps in the biosynthesis of 5-methylaminomethyl-2-thiouridine (mnm(5)s(2)U) at the wobble position (U34) in tRNA. Catalyzes the FAD-dependent demodification of cmnm(5)s(2)U34 to nm(5)s(2)U34, followed by the transfer of a methyl group from S-adenosyl-L-methionine to nm(5)s(2)U34, to form mnm(5)s(2)U34. This chain is tRNA 5-methylaminomethyl-2-thiouridine biosynthesis bifunctional protein MnmC, found in Idiomarina loihiensis (strain ATCC BAA-735 / DSM 15497 / L2-TR).